Reading from the N-terminus, the 209-residue chain is Transmembrane domain-containing protein TMIGD3 (209 aa).

The first 15 residues, 1–15 (MEFLLLLSLALFSDA), serve as a signal peptide directing secretion. A helical membrane pass occupies residues 152–172 (SILIICILITSLGIIFIISHL). Residues 179 to 201 (QRNREVTGKSISRNPQASQGPSM) form a disordered region. Residues 187–201 (KSISRNPQASQGPSM) are compositionally biased toward polar residues.

The protein localises to the membrane. The sequence is that of Transmembrane domain-containing protein TMIGD3 (Tmigd3) from Mus musculus (Mouse).